The following is a 96-amino-acid chain: Sec-independent protein translocase protein TatA (96 aa).

The helical transmembrane segment at 1 to 21 (MGFSSIWHWIIVLVVVLLLFG) threads the bilayer. A disordered region spans residues 42-96 (GMADDEDDEAASVSAERRGIEDGKPAQTIYPPQQPQQPQQPPQQPPVHRDDAPRG). A compositionally biased stretch (basic and acidic residues) spans 56–65 (AERRGIEDGK). The span at 73-86 (PQQPQQPQQPPQQP) shows a compositional bias: pro residues.

This sequence belongs to the TatA/E family. As to quaternary structure, the Tat system comprises two distinct complexes: a TatABC complex, containing multiple copies of TatA, TatB and TatC subunits, and a separate TatA complex, containing only TatA subunits. Substrates initially bind to the TatABC complex, which probably triggers association of the separate TatA complex to form the active translocon.

It localises to the cell inner membrane. Part of the twin-arginine translocation (Tat) system that transports large folded proteins containing a characteristic twin-arginine motif in their signal peptide across membranes. TatA could form the protein-conducting channel of the Tat system. The chain is Sec-independent protein translocase protein TatA from Rhodospirillum rubrum (strain ATCC 11170 / ATH 1.1.1 / DSM 467 / LMG 4362 / NCIMB 8255 / S1).